A 474-amino-acid chain; its full sequence is Gamma-aminobutyric acid receptor subunit gamma-2 (474 aa).

A signal peptide spans 1–38 (MSSPNTWSIGSSVYSPVFSQKMTLWILLLLSLYPGFTS). The Extracellular portion of the chain corresponds to 39 to 274 (QKSDDDYEDY…FDLSRRMGYF (236 aa)). 2 N-linked (GlcNAc...) asparagine glycosylation sites follow: asparagine 51 and asparagine 128. Cysteine 189 and cysteine 203 are disulfide-bonded. The N-linked (GlcNAc...) asparagine glycan is linked to asparagine 246. The helical transmembrane segment at 275 to 295 (TIQTYIPCTLIVVLSWVSFWI) threads the bilayer. At 296 to 301 (NKDAVP) the chain is on the cytoplasmic side. Residues 302 to 321 (ARTSLGITTVLTMTTLSTIA) form a helical membrane-spanning segment. Residues 322 to 333 (RKSLPKVSYVTA) are Extracellular-facing. The helical transmembrane segment at 334–358 (MDLFVSVCFIFVFSALVEYGTLHYF) threads the bilayer. Residues 359–450 (VSNRKPSKDK…IHIRIAKMDS (92 aa)) lie on the Cytoplasmic side of the membrane. Position 381 is a phosphoserine; by PKC (serine 381). The chain crosses the membrane as a helical span at residues 451-472 (YARIFFPTAFCLFNLVYWVSYL). Topologically, residues 473–474 (YL) are extracellular.

It belongs to the ligand-gated ion channel (TC 1.A.9) family. Gamma-aminobutyric acid receptor (TC 1.A.9.5) subfamily. GABRG2 sub-subfamily. As to quaternary structure, heteropentamer, formed by a combination of alpha (GABRA1-6), beta (GABRB1-3), gamma (GABRG1-3), delta (GABRD), epsilon (GABRE), rho (GABRR1-3), pi (GABRP) and theta (GABRQ) chains, each subunit exhibiting distinct physiological and pharmacological properties. Interacts with GABARAP. Interacts with KIF21B. Identified in a complex of 720 kDa composed of LHFPL4, NLGN2, GABRA1, GABRB2, GABRG2 and GABRB3. Interacts with LHFPL4. Interacts with SHISA7; interaction leads to the regulation of GABA(A) receptor trafficking, channel deactivation kinetics and pharmacology. Post-translationally, glycosylated. In terms of processing, palmitoylated by ZDHHC3/GODZ; required for the accumulation of GABA(A) receptors at the postsynaptic membrane of inhibitory GABAergic synapses. In terms of tissue distribution, expressed in brain neurons (at protein level).

It localises to the postsynaptic cell membrane. The protein resides in the cell membrane. Its subcellular location is the cell projection. The protein localises to the dendrite. It is found in the cytoplasmic vesicle membrane. The enzyme catalyses chloride(in) = chloride(out). Allosterically activated by benzodiazepines. Activated by pentobarbital. Inhibited by the antagonist bicuculline. Inhibited by zinc ions. Potentiated by histamine. In terms of biological role, gamma subunit of the heteropentameric ligand-gated chloride channel gated by gamma-aminobutyric acid (GABA), a major inhibitory neurotransmitter in the brain. GABA-gated chloride channels, also named GABA(A) receptors (GABAAR), consist of five subunits arranged around a central pore and contain GABA active binding site(s) located at the alpha and beta subunit interface(s). When activated by GABA, GABAARs selectively allow the flow of chloride anions across the cell membrane down their electrochemical gradient. Gamma-2/GABRG2-containing GABAARs are found at both synaptic and extrasynaptic sites. Chloride influx into the postsynaptic neuron following GABAAR opening decreases the neuron ability to generate a new action potential, thereby reducing nerve transmission. GABAARs containing alpha-1 and beta-2 or -3 subunits exhibit synaptogenic activity; the gamma-2 subunit being necessary but not sufficient to induce rapid synaptic contacts formation. Extrasynaptic gamma-2-containing receptors contribute to the tonic GABAergic inhibition. GABAARs function also as histamine receptor where histamine binds at the interface of two neighboring beta subunits and potentiates GABA response in a gamma-2 subunit-controlled manner. This Mus musculus (Mouse) protein is Gamma-aminobutyric acid receptor subunit gamma-2.